A 195-amino-acid chain; its full sequence is Probable GTP-binding protein EngB (195 aa).

The 174-residue stretch at 22-195 (GLPEIALAGR…WGAIKKMISR (174 aa)) folds into the EngB-type G domain. GTP contacts are provided by residues 30–37 (GRSNVGKS), 57–61 (GKTQT), 75–78 (DVPG), 142–145 (TKAD), and 174–176 (FSS). Positions 37 and 59 each coordinate Mg(2+).

Belongs to the TRAFAC class TrmE-Era-EngA-EngB-Septin-like GTPase superfamily. EngB GTPase family. The cofactor is Mg(2+).

Necessary for normal cell division and for the maintenance of normal septation. The sequence is that of Probable GTP-binding protein EngB from Bacillus velezensis (strain DSM 23117 / BGSC 10A6 / LMG 26770 / FZB42) (Bacillus amyloliquefaciens subsp. plantarum).